Here is a 535-residue protein sequence, read N- to C-terminus: Bifunctional purine biosynthesis protein PurH (535 aa).

Residues 6-151 (TRLPIRRALI…KNHKDVAIVV (146 aa)) form the MGS-like domain.

The protein belongs to the PurH family.

The catalysed reaction is (6R)-10-formyltetrahydrofolate + 5-amino-1-(5-phospho-beta-D-ribosyl)imidazole-4-carboxamide = 5-formamido-1-(5-phospho-D-ribosyl)imidazole-4-carboxamide + (6S)-5,6,7,8-tetrahydrofolate. It catalyses the reaction IMP + H2O = 5-formamido-1-(5-phospho-D-ribosyl)imidazole-4-carboxamide. The protein operates within purine metabolism; IMP biosynthesis via de novo pathway; 5-formamido-1-(5-phospho-D-ribosyl)imidazole-4-carboxamide from 5-amino-1-(5-phospho-D-ribosyl)imidazole-4-carboxamide (10-formyl THF route): step 1/1. It participates in purine metabolism; IMP biosynthesis via de novo pathway; IMP from 5-formamido-1-(5-phospho-D-ribosyl)imidazole-4-carboxamide: step 1/1. This chain is Bifunctional purine biosynthesis protein PurH, found in Pseudomonas entomophila (strain L48).